Here is a 773-residue protein sequence, read N- to C-terminus: Protein FAM149A (773 aa).

Composition is skewed to low complexity over residues 18–37 (TSTAPPAGPSSRPSGGAAAA) and 54–90 (LLRALAPDSPSASRRSPAPLLSSPYSRGSAASRAAGA). Disordered regions lie at residues 18 to 155 (TSTA…RELG), 173 to 210 (DIGEEGASDGDSGDGEARGLSEGRRRHGFTVRSKDSLP), 232 to 264 (FSSSGSHTPTGAHTSWSGSATQSSTTGSSTERG), and 568 to 613 (TQNE…PWRL). Residues 174-186 (IGEEGASDGDSGD) show a composition bias toward acidic residues. Residues 245 to 264 (TSWSGSATQSSTTGSSTERG) show a composition bias toward low complexity.

The protein belongs to the FAM149 family.

The polypeptide is Protein FAM149A (FAM149A) (Homo sapiens (Human)).